Here is a 305-residue protein sequence, read N- to C-terminus: Serine/threonine-protein phosphatase PP-X homolog 3 (305 aa).

The Mn(2+) site is built by Asp53, His55, Asp81, and Asn113. Catalysis depends on His114, which acts as the Proton donor. Mn(2+)-binding residues include His163 and His237.

This sequence belongs to the PPP phosphatase family. PP-4 (PP-X) subfamily. Mn(2+) is required as a cofactor.

It carries out the reaction O-phospho-L-seryl-[protein] + H2O = L-seryl-[protein] + phosphate. The enzyme catalyses O-phospho-L-threonyl-[protein] + H2O = L-threonyl-[protein] + phosphate. The protein is Serine/threonine-protein phosphatase PP-X homolog 3 (Ppx3) of Paramecium tetraurelia.